A 118-amino-acid polypeptide reads, in one-letter code: MSIKYSNKINKIRTFALSLVFIGLFIAYLGVFFRENIIVMTTFMMVGFLAVIASTVVYFWIGMLSTKTIQIICPSCDKPTKMLGRVDACMHCNQPLTLDRDLEGKEFDEKYNKKSYKS.

Helical transmembrane passes span I12–F32 and F43–M63.

It belongs to the UPF0295 family.

Its subcellular location is the cell membrane. The polypeptide is UPF0295 protein BCG9842_B4782 (Bacillus cereus (strain G9842)).